The primary structure comprises 94 residues: Integration host factor subunit beta (94 aa).

This sequence belongs to the bacterial histone-like protein family. In terms of assembly, heterodimer of an alpha and a beta chain.

In terms of biological role, this protein is one of the two subunits of integration host factor, a specific DNA-binding protein that functions in genetic recombination as well as in transcriptional and translational control. The chain is Integration host factor subunit beta from Aeromonas hydrophila subsp. hydrophila (strain ATCC 7966 / DSM 30187 / BCRC 13018 / CCUG 14551 / JCM 1027 / KCTC 2358 / NCIMB 9240 / NCTC 8049).